A 710-amino-acid chain; its full sequence is Exocyst complex component 5 (710 aa).

The stretch at 44-96 (DTFIQTIKDLKILQEKQQSKCERLEESLRQEKESHAKKIAKLQERHQTAIDVF) forms a coiled coil.

The protein belongs to the SEC10 family. As to quaternary structure, the exocyst complex is composed of Sec3/Exoc1, Sec5/Exoc2, Sec6/Exoc3, Sec8/Exoc4, Sec10/Exoc5, Sec15/Exoc6, Exo70/Exoc7 and Exo84/Exoc8.

Its function is as follows. Component of the exocyst complex involved in the docking of exocytic vesicles with fusion sites on the plasma membrane. The polypeptide is Exocyst complex component 5 (Drosophila melanogaster (Fruit fly)).